Consider the following 487-residue polypeptide: GTPase Der (487 aa).

2 EngA-type G domains span residues 5–169 (PKLA…SREI) and 178–351 (IKVA…ANSQ). Residues 11-18 (GRPNVGKS), 58-62 (DTGGI), 121-124 (NKID), 184-191 (GRANVGKS), 231-235 (DTAGI), and 296-299 (NKWD) contribute to the GTP site. Residues 352–439 (KRITTHQLNK…IHLKGKTKKD (88 aa)) form the KH-like domain. The disordered stretch occupies residues 441–466 (PVSSLSLTRKQTKSTDQENNEYDELY).

This sequence belongs to the TRAFAC class TrmE-Era-EngA-EngB-Septin-like GTPase superfamily. EngA (Der) GTPase family. In terms of assembly, associates with the 50S ribosomal subunit.

Its function is as follows. GTPase that plays an essential role in the late steps of ribosome biogenesis. This chain is GTPase Der, found in Protochlamydia amoebophila (strain UWE25).